The sequence spans 359 residues: Heat-inducible transcription repressor HrcA (359 aa).

This sequence belongs to the HrcA family.

Its function is as follows. Negative regulator of class I heat shock genes (grpE-dnaK-dnaJ and groELS operons). Prevents heat-shock induction of these operons. This chain is Heat-inducible transcription repressor HrcA, found in Sinorhizobium medicae (strain WSM419) (Ensifer medicae).